The following is a 50-amino-acid chain: Mast cell degranulating peptide (50 aa).

The N-terminal stretch at 1-27 (MISMLRCTFFFLSVILITSYFVTPTMS) is a signal peptide. The residue at position 29 (K29) is an N6-formyllysine; partial. 2 cysteine pairs are disulfide-bonded: C30/C42 and C32/C46. 2 positions are modified to N6-formyllysine; partial: K44 and K48. N49 bears the Asparagine amide mark.

In terms of tissue distribution, expressed by the venom gland.

The protein localises to the secreted. Potent anti-inflammatory agent. At low concentrations, mediates the degranulation of mast cells thus evoking an inflammatory response. Also acts as a neurotoxin capable of blocking a class of voltage-gated potassium channels. In Apis mellifera (Honeybee), this protein is Mast cell degranulating peptide.